The chain runs to 1241 residues: MSGIESTEEPCDSMTESQSLSPLEPEERQTRKDSGLQSQSLTKRHFAFSPHRLITSISRHTSPHKPRPKSESRVPVPKLHSLPPQRLASPERDKPSIEGISKSFVSFLTAASVYAGFQDLEGEDQQVSPDDVSAGESEDQQADESSDEQEDDDQDDRTFYATDPSPTELTINENTPLPEPEPPRRTLRKARSRFEFSVVKRLSENENDQLAQKRAIALSNKLKRTFDISDTDVFISDYPCWLMGDVLLQGHLYITKHHILFFAFLPKKQGSISKSGALTTKSYPSLREHRKWAVLRNNTFSVYSNSTDLYFPLLVIDLRTALRAEILQSSSTKQNPSKPVWIRIITESRTHWFLADNLASARSWVSSLKKHIFASRNKGDQVAIKIPLQNVVDLELTSVIGVTKNLRIKVIESADTFAIDDYFLMFFSRGEKAVEDIKKVIHDAGMEISEGTSTESEDEQGVDNNLLKSKIELLKKSPSMVQTSSKSNVPVIRMDEPADDFSQEQESAESSKPVSDDEIVSADDNQELEEKQPQDNLANAEKENHDKVSRANSRRTWSTRSLVQGLTAITQGWMSPSPMAHFDEKYAVLRGEEDSYFVKDAEQRKAATERFRKHFSLTDGEKLIATYHAYLVKGIPAYGKIYLGSNEMCFRSTLPGTGTIMILPFSDIENVNKEKGFRFGYSGLVVVIHGHEELFFEFASDQARDDCEFMLLKQMDMFKKGSTDSSPPNASEGSSDESCNLAESNTSLASARLRMFENRIHDAIGLDVPIIIEEHPLTKTKVRPLKSYRFTLLTIGSRGDVQPYIALGKALMKEGHQVRIVTHAEFEPWIKKHGIRFASIAGDPSELMALMVTHPTINYNFIKEAKSKFRSWIDDLLVTSWKACQDTDILIESPSSICGIHIAEKLQIPYFRAFTMPWTRTRAYPHAFMVPDQKLGGAYNYMTHVAFENGYWRGTAHQVNKWRVETLGLPKTSLAEMKQNNVPFLYNVSPTVFPPSVDFAEWVKVTGYWFLDESETYQPPEVLTKFIEQARKDGKKVVYIGFGSIVVSKPSELTQAVVDAVLEADVRCILNKGWSDRLGTKTEIEVVLPPEIYNAGSVPHDWLFPQIDAAVHHGGSGTTGASLRFGVPTIIKPFFGDQKFYAGRVEDLGCGVSLKDLNYKSLARALKEVTTNTRIIEKAKLVGARIRSETGVQTAIETIYNEMEYARSLSISKVKQVSVVKSDEEFDDDKDEEVEGSWLLV.

Positions 1 to 11 (MSGIESTEEPC) are enriched in acidic residues. Disordered stretches follow at residues 1–97 (MSGI…KPSI) and 124–189 (DQQV…TLRK). Positions 25–34 (PEERQTRKDS) are enriched in basic and acidic residues. Over residues 136 to 155 (ESEDQQADESSDEQEDDDQD) the composition is skewed to acidic residues. A GRAM 1 domain is found at 220–267 (NKLKRTFDISDTDVFISDYPCWLMGDVLLQGHLYITKHHILFFAFLPK). A PH domain is found at 271–373 (SISKSGALTT…WVSSLKKHIF (103 aa)). The interval 499–556 (DDFSQEQESAESSKPVSDDEIVSADDNQELEEKQPQDNLANAEKENHDKVSRANSRRT) is disordered. Positions 516-527 (DDEIVSADDNQE) are enriched in acidic residues. Positions 540 to 549 (AEKENHDKVS) are enriched in basic and acidic residues. Positions 609–675 (ERFRKHFSLT…SDIENVNKEK (67 aa)) constitute a GRAM 2 domain. The interval 720-741 (KGSTDSSPPNASEGSSDESCNL) is disordered. Over residues 723–741 (TDSSPPNASEGSSDESCNL) the composition is skewed to polar residues. Serine 797, arginine 798, aspartate 800, asparagine 1071, valine 1098, histidine 1100, histidine 1113, serine 1116, glycine 1117, threonine 1118, aspartate 1137, and glutamine 1138 together coordinate UDP-alpha-D-glucose.

Belongs to the glycosyltransferase 28 family.

The protein localises to the cytoplasm. Its subcellular location is the preautophagosomal structure membrane. It carries out the reaction a sterol + UDP-alpha-D-glucose = a sterol 3-beta-D-glucoside + UDP + H(+). The catalysed reaction is ergosterol + UDP-alpha-D-glucose = ergosteryl 3-beta-D-glucoside + UDP + H(+). Functionally, sterol glycosyltransferase responsible for the glycosylation of ergosterol to form ergosterol-glucoside. Mediates autophagic degradation of peroxisomes (pexophagy). This Pichia angusta (Yeast) protein is Sterol 3-beta-glucosyltransferase.